Here is a 310-residue protein sequence, read N- to C-terminus: Malate dehydrogenase (310 aa).

NAD(+) contacts are provided by residues 7–12 (GAGNVG) and aspartate 32. The substrate site is built by arginine 81 and arginine 87. NAD(+)-binding positions include asparagine 94 and 117–119 (VSN). Asparagine 119 and arginine 150 together coordinate substrate. Catalysis depends on histidine 174, which acts as the Proton acceptor.

This sequence belongs to the LDH/MDH superfamily. MDH type 3 family. Homotetramer; arranged as a dimer of dimers.

It carries out the reaction (S)-malate + NAD(+) = oxaloacetate + NADH + H(+). In terms of biological role, catalyzes the reversible oxidation of malate to oxaloacetate. The polypeptide is Malate dehydrogenase (Chlorobaculum tepidum (strain ATCC 49652 / DSM 12025 / NBRC 103806 / TLS) (Chlorobium tepidum)).